The chain runs to 142 residues: Large ribosomal subunit protein uL13 (142 aa).

It belongs to the universal ribosomal protein uL13 family. As to quaternary structure, part of the 50S ribosomal subunit.

Functionally, this protein is one of the early assembly proteins of the 50S ribosomal subunit, although it is not seen to bind rRNA by itself. It is important during the early stages of 50S assembly. The chain is Large ribosomal subunit protein uL13 from Pseudomonas syringae pv. syringae (strain B728a).